A 451-amino-acid chain; its full sequence is NAC domain containing protein 52 (451 aa).

Positions 1-21 (MGRESVAVVTAPPSATAPGTA) are disordered. The NAC domain occupies 27–178 (LAPGFRFHPT…AYVLCRVFHK (152 aa)). A DNA-binding region spans residues 126–184 (LGMKKTLVFHSGRAPDGLRTNWVMHEYRLVEYETEKNGNLVQDAYVLCRVFHKNNIGPP). Disordered stretches follow at residues 255-337 (DQQN…TTTT) and 370-400 (KKEKPQQPLRPHKEPLPPQTPLASPEEKVND). A compositionally biased stretch (basic and acidic residues) spans 256–270 (QQNHHENDLKPEEHN). Positions 272–292 (NNNYDENEETLKREQMEEEER) form a coiled coil. A compositionally biased stretch (low complexity) spans 318–337 (ESNNNSSRNTQDHCSSTTTT). The segment covering 370 to 384 (KKEKPQQPLRPHKEP) has biased composition (basic and acidic residues). A coiled-coil region spans residues 398–446 (VNDLQKEIHQMSVERETFKLEMMSAEAMISILQSRIDALRQENEELKKN).

In terms of assembly, interacts with JMJ14 and NAC050. Mostly expressed in floral organs, and, at low levels, in other organs.

It localises to the nucleus. In terms of biological role, transcriptional repressor that binds to the motif 5'-(C/T)A(C/A)G-3' in the promoter of target genes. Also binds to the 5'-CTTGNNNNNCAAG-3' consensus sequence in chromatin. Can bind to the mitochondrial dysfunction motif (MDM) present in the upstream regions of mitochondrial dysfunction stimulon (MDS) genes involved in mitochondrial retrograde regulation (MRR). Together with NAC050 and JMJ14, regulates gene expression and flowering time by associating with the histone demethylase JMJ14, probably by the promotion of RNA-mediated gene silencing. Regulates siRNA-dependent post-transcriptional gene silencing (PTGS) through SGS3 expression modulation. Required during pollen development. In Arabidopsis thaliana (Mouse-ear cress), this protein is NAC domain containing protein 52.